We begin with the raw amino-acid sequence, 853 residues long: Guanine nucleotide exchange protein smcr8a (853 aa).

In terms of domain architecture, uDENN FLCN/SMCR8-type spans 47–219 (TSYAKFSKDF…KETELQKMNN (173 aa)). Disordered regions lie at residues 272 to 298 (PVMD…SRKS) and 418 to 454 (LKPG…SFSS). Residues 280–298 (DTNPSDSAENTVETESRKS) show a composition bias toward polar residues. The region spanning 316–753 (RLKTLEELCD…LISHLADHRT (438 aa)) is the cDENN FLCN/SMCR8-type domain. Residues 421–432 (GVESGEGPPESS) show a composition bias toward low complexity. Positions 433–454 (TSDITQETSEAADTETKGSFSS) are enriched in polar residues. The region spanning 762–826 (FLHIQGMLTQ…IIQYLSELIK (65 aa)) is the dDENN FLCN/SMCR8-type domain.

The protein belongs to the SMCR8 family. Component of the C9orf72-SMCR8 complex. The C9orf72-SMCR8 complex associates with the ATG1/ULK1 kinase complex.

The protein localises to the cytoplasm. Its subcellular location is the nucleus. Component of the C9orf72-SMCR8 complex, a complex that has guanine nucleotide exchange factor (GEF) activity and regulates autophagy. In the complex, C9orf72 and SMCR8 probably constitute the catalytic subunits that promote the exchange of GDP to GTP, converting inactive GDP-bound RAB8A and RAB39B into their active GTP-bound form, thereby promoting autophagosome maturation. The C9orf72-SMCR8 complex also acts as a negative regulator of autophagy initiation by interacting with the ATG1/ULK1 kinase complex and inhibiting its protein kinase activity. This chain is Guanine nucleotide exchange protein smcr8a (smcr8a), found in Danio rerio (Zebrafish).